Consider the following 173-residue polypeptide: Crossover junction endodeoxyribonuclease RuvC (173 aa).

Residues aspartate 11, glutamate 71, and aspartate 143 contribute to the active site. Residues aspartate 11, glutamate 71, and aspartate 143 each coordinate Mg(2+).

The protein belongs to the RuvC family. In terms of assembly, homodimer which binds Holliday junction (HJ) DNA. The HJ becomes 2-fold symmetrical on binding to RuvC with unstacked arms; it has a different conformation from HJ DNA in complex with RuvA. In the full resolvosome a probable DNA-RuvA(4)-RuvB(12)-RuvC(2) complex forms which resolves the HJ. Requires Mg(2+) as cofactor.

It localises to the cytoplasm. The enzyme catalyses Endonucleolytic cleavage at a junction such as a reciprocal single-stranded crossover between two homologous DNA duplexes (Holliday junction).. The RuvA-RuvB-RuvC complex processes Holliday junction (HJ) DNA during genetic recombination and DNA repair. Endonuclease that resolves HJ intermediates. Cleaves cruciform DNA by making single-stranded nicks across the HJ at symmetrical positions within the homologous arms, yielding a 5'-phosphate and a 3'-hydroxyl group; requires a central core of homology in the junction. The consensus cleavage sequence is 5'-(A/T)TT(C/G)-3'. Cleavage occurs on the 3'-side of the TT dinucleotide at the point of strand exchange. HJ branch migration catalyzed by RuvA-RuvB allows RuvC to scan DNA until it finds its consensus sequence, where it cleaves and resolves the cruciform DNA. This Brucella abortus (strain 2308) protein is Crossover junction endodeoxyribonuclease RuvC.